Here is a 307-residue protein sequence, read N- to C-terminus: Acetaldehyde dehydrogenase 1 (307 aa).

The active-site Acyl-thioester intermediate is the Cys-131. Residues 162 to 170 (SIGPGTRKN) and Asn-273 each bind NAD(+).

This sequence belongs to the acetaldehyde dehydrogenase family.

It catalyses the reaction acetaldehyde + NAD(+) + CoA = acetyl-CoA + NADH + H(+). This Metapseudomonas furukawaii (Pseudomonas furukawaii) protein is Acetaldehyde dehydrogenase 1 (salG).